Reading from the N-terminus, the 177-residue chain is ATP synthase subunit delta (177 aa).

The protein belongs to the ATPase delta chain family. As to quaternary structure, F-type ATPases have 2 components, F(1) - the catalytic core - and F(0) - the membrane proton channel. F(1) has five subunits: alpha(3), beta(3), gamma(1), delta(1), epsilon(1). F(0) has three main subunits: a(1), b(2) and c(10-14). The alpha and beta chains form an alternating ring which encloses part of the gamma chain. F(1) is attached to F(0) by a central stalk formed by the gamma and epsilon chains, while a peripheral stalk is formed by the delta and b chains.

The protein localises to the cell inner membrane. Functionally, f(1)F(0) ATP synthase produces ATP from ADP in the presence of a proton or sodium gradient. F-type ATPases consist of two structural domains, F(1) containing the extramembraneous catalytic core and F(0) containing the membrane proton channel, linked together by a central stalk and a peripheral stalk. During catalysis, ATP synthesis in the catalytic domain of F(1) is coupled via a rotary mechanism of the central stalk subunits to proton translocation. In terms of biological role, this protein is part of the stalk that links CF(0) to CF(1). It either transmits conformational changes from CF(0) to CF(1) or is implicated in proton conduction. This chain is ATP synthase subunit delta, found in Shigella flexneri.